The following is a 297-amino-acid chain: Protease HtpX homolog (297 aa).

Helical transmembrane passes span 14–34 (VILLFAFFVLLVVIGAAAGYL) and 39–59 (YQLGAAFALIIGAIYAFSMIF). H143 contributes to the Zn(2+) binding site. The active site involves E144. H147 provides a ligand contact to Zn(2+). 2 helical membrane-spanning segments follow: residues 158–178 (IAVALASAVTLISSIGGRMMW) and 193–213 (GFGAIMLIFSILSLILAPLAA). E225 contributes to the Zn(2+) binding site.

It belongs to the peptidase M48B family. The cofactor is Zn(2+).

The protein resides in the cell membrane. This chain is Protease HtpX homolog, found in Streptococcus equi subsp. equi (strain 4047).